Consider the following 570-residue polypeptide: MIPPEIRRSVLLQKAIKLALAGTLLTFASFSATAADPSSDTETPQPPDILLGPLFNDVQNAKLFPDQKTFADAIPNSDPLMILADYRMQRNQSGFDLRHFVDVNFTLPKAGEKYVPPAGQSLREHIDGLWPVLTRSTKNVEKWDSLLPLPESYVVPGGRFREIYYWDSYFTMLGLAESGHWDKVADMVANFGYEIDAWGHIPNGNRTYYLSRSQPPFFAFMVELLAQHEGDDALKEYLPQLQKEYAYWMEGVETLQPGQQNQRVVKLEDGSVLNRYWDDRDTPRPESWVEDIATVKSNPNRPATEIYRDLRSAAASGWDFSSRWMDNPQQLSTIRTTTIVPVDLNALLYQLEKTLARASAAAGDRAKASHYDALANARQKAIEMHLWNNKEGWYADYDLKNNKIRDQLTAAALFPLYVNAAAKDRAAKVAAAAQAHLLQPGGLATTSVKSGQQWDAPNGWAPLQWVAAEGLQNYGQDDVAMEVTWRFLTNVQHTYDREKKLVEKYDVSSTGTGGGGGEYPLQDGFGWTNGVTLKMLDLICPQEKPCDSVPSTRPASLSATPTKTPSAATQ.

An N-terminal signal peptide occupies residues 1–34 (MIPPEIRRSVLLQKAIKLALAGTLLTFASFSATA). Substrate contacts are provided by residues Arg-159, 166–167 (WD), Asn-203, 212–214 (RSQ), 284–286 (RPE), and Gly-317. Catalysis depends on proton donor/acceptor residues Asp-319 and Glu-503. Glu-518 contacts substrate. The disordered stretch occupies residues 544–570 (KPCDSVPSTRPASLSATPTKTPSAATQ). Over residues 554–570 (PASLSATPTKTPSAATQ) the composition is skewed to low complexity.

This sequence belongs to the glycosyl hydrolase 37 family. In terms of assembly, monomer.

The protein localises to the periplasm. The enzyme catalyses alpha,alpha-trehalose + H2O = alpha-D-glucose + beta-D-glucose. Functionally, provides the cells with the ability to utilize trehalose at high osmolarity by splitting it into glucose molecules that can subsequently be taken up by the phosphotransferase-mediated uptake system. The sequence is that of Periplasmic trehalase from Salmonella dublin (strain CT_02021853).